The sequence spans 131 residues: Small ribosomal subunit protein uS8 (131 aa).

It belongs to the universal ribosomal protein uS8 family. Part of the 30S ribosomal subunit. Contacts proteins S5 and S12.

Functionally, one of the primary rRNA binding proteins, it binds directly to 16S rRNA central domain where it helps coordinate assembly of the platform of the 30S subunit. In Bordetella avium (strain 197N), this protein is Small ribosomal subunit protein uS8.